A 425-amino-acid polypeptide reads, in one-letter code: MLDQKLIRENPTSVEENLSLRGKVYKISHIHELTVKKKEIDIEISSLQSESKKLSKLISQVIGKSQDNNSQELNDLKKKGNEYRIKISELEEKQRILNKKVDDEIYNLPNFPSKDAPIGKDESENLQIKTWGDPLIKENIKSHWEIGESLNIFDSIKSTKISKSRFITLIGNGARLERALINFMLDMHTKNGYLELMPPALVNSESLTGSGQLPKFSNESFKCSNDDLWLSPTAEVPLTALHRNELIDPKHLPLKYVAYSPCFRREAGSYGRDTKGLIRLHQFNKVELYWFCDPSKSLEAHKEITTDAESILKKLNLPYRLVDICTGDLGFSSSRTFDLEVWLPSSKCYREISSCSNCLDFQARRSSIRSKIDKKNTYIHTLNGSGLAIGRTMAAILENGQQTDGSVKIPDALVPYFGSNLLKTA.

Position 233–235 (233–235 (TAE)) interacts with L-serine. 264-266 (RRE) is a binding site for ATP. Glu287 contributes to the L-serine binding site. Residue 351 to 354 (EISS) coordinates ATP. Ser385 contributes to the L-serine binding site.

Belongs to the class-II aminoacyl-tRNA synthetase family. Type-1 seryl-tRNA synthetase subfamily. In terms of assembly, homodimer. The tRNA molecule binds across the dimer.

The protein localises to the cytoplasm. The enzyme catalyses tRNA(Ser) + L-serine + ATP = L-seryl-tRNA(Ser) + AMP + diphosphate + H(+). It catalyses the reaction tRNA(Sec) + L-serine + ATP = L-seryl-tRNA(Sec) + AMP + diphosphate + H(+). It participates in aminoacyl-tRNA biosynthesis; selenocysteinyl-tRNA(Sec) biosynthesis; L-seryl-tRNA(Sec) from L-serine and tRNA(Sec): step 1/1. Its function is as follows. Catalyzes the attachment of serine to tRNA(Ser). Is also able to aminoacylate tRNA(Sec) with serine, to form the misacylated tRNA L-seryl-tRNA(Sec), which will be further converted into selenocysteinyl-tRNA(Sec). This chain is Serine--tRNA ligase, found in Prochlorococcus marinus (strain AS9601).